The chain runs to 291 residues: Acetylglutamate kinase (291 aa).

Substrate contacts are provided by residues 65 to 66 (GG), arginine 87, and asparagine 186.

It belongs to the acetylglutamate kinase family. ArgB subfamily.

It is found in the cytoplasm. The catalysed reaction is N-acetyl-L-glutamate + ATP = N-acetyl-L-glutamyl 5-phosphate + ADP. The protein operates within amino-acid biosynthesis; L-arginine biosynthesis; N(2)-acetyl-L-ornithine from L-glutamate: step 2/4. Its function is as follows. Catalyzes the ATP-dependent phosphorylation of N-acetyl-L-glutamate. In Mycolicibacterium vanbaalenii (strain DSM 7251 / JCM 13017 / BCRC 16820 / KCTC 9966 / NRRL B-24157 / PYR-1) (Mycobacterium vanbaalenii), this protein is Acetylglutamate kinase.